The chain runs to 152 residues: MKIEVIVPGKISKHLKSAFDFYLDKLKRFCDLKISFVRLGGDINKTSKSVILNNEEKEILNKLKGRSFVLLDLYGKQIDSLEFSSLLKNKLLEGNLCFVIGGPLGISENLRRMSEKRISLSKLTFTHEMALILLLEQLFRGFKIINNEKYHY.

S-adenosyl-L-methionine is bound by residues Leu-71, Gly-101, and 120-125 (LSKLTF).

This sequence belongs to the RNA methyltransferase RlmH family. As to quaternary structure, homodimer.

It is found in the cytoplasm. It carries out the reaction pseudouridine(1915) in 23S rRNA + S-adenosyl-L-methionine = N(3)-methylpseudouridine(1915) in 23S rRNA + S-adenosyl-L-homocysteine + H(+). Its function is as follows. Specifically methylates the pseudouridine at position 1915 (m3Psi1915) in 23S rRNA. The protein is Ribosomal RNA large subunit methyltransferase H of Thermosipho melanesiensis (strain DSM 12029 / CIP 104789 / BI429).